The following is a 278-amino-acid chain: Protein EXORDIUM-like 4 (278 aa).

An N-terminal signal peptide occupies residues 1–23; that stretch reads MAYNYRFAILLVLLSATVGFTAA. The N-linked (GlcNAc...) asparagine glycan is linked to N35.

It belongs to the EXORDIUM family.

It is found in the secreted. The protein localises to the extracellular space. The protein resides in the apoplast. Functionally, may play a role in a brassinosteroid-dependent regulation of growth and development. This is Protein EXORDIUM-like 4 (EXL4) from Arabidopsis thaliana (Mouse-ear cress).